A 115-amino-acid chain; its full sequence is Nitrogen regulatory protein P-II 2 (115 aa).

Tyr54 carries the O-UMP-tyrosine modification.

The protein belongs to the P(II) protein family.

Its function is as follows. Could be involved in the regulation of nitrogen fixation. This chain is Nitrogen regulatory protein P-II 2, found in Methanothermobacter thermautotrophicus (strain ATCC 29096 / DSM 1053 / JCM 10044 / NBRC 100330 / Delta H) (Methanobacterium thermoautotrophicum).